We begin with the raw amino-acid sequence, 203 residues long: Thymidylate kinase (203 aa).

10–17 (GIDGCGKT) is a binding site for ATP.

Belongs to the thymidylate kinase family.

The catalysed reaction is dTMP + ATP = dTDP + ADP. Functionally, phosphorylation of dTMP to form dTDP in both de novo and salvage pathways of dTTP synthesis. In Thermoanaerobacter pseudethanolicus (strain ATCC 33223 / 39E) (Clostridium thermohydrosulfuricum), this protein is Thymidylate kinase.